The sequence spans 1948 residues: [F-actin]-monooxygenase MICAL2 (1948 aa).

Residues 2–494 form a monooxygenase domain region; it reads GENEDEKQAQ…KHLYITKEMD (493 aa). Residues Cys97, 116–118, 123–125, Phe183, Tyr298, and Asp398 contribute to the FAD site; these read EKR and RNN. In terms of domain architecture, Calponin-homology (CH) spans 516 to 619; sequence DIRPNKLLTW…MVMYLSKFYE (104 aa). Residue Ser631 is modified to Phosphoserine. Residues 660 to 681 carry the Nuclear localization signal motif; it reads RKRTPRVDAQTEENDVNKRRRQ. Disordered stretches follow at residues 664-709, 753-776, and 891-923; these read PRVD…ESGN, SRPP…PPLK, and KRVP…DSVS. Over residues 693–709 the composition is skewed to polar residues; that stretch reads SSRSLGSSQEYAKESGN. The segment covering 896–917 has biased composition (pro residues); sequence AHPPSPPSCLPSPDPAAAPSPP. Residues 980 to 1042 form the LIM zinc-binding domain; the sequence is DTCYFCKKRV…KLHFAHCKTS (63 aa). Zn(2+) is bound by residues Cys982, Cys985, His1003, Cys1006, Cys1009, Cys1012, Cys1032, and His1035. Disordered regions lie at residues 1045–1134, 1146–1185, and 1233–1298; these read QRKR…GQDG, SEDS…QPLT, and QSNS…DDVS. Positions 1050–1059 are enriched in basic and acidic residues; sequence AELNQQREEE. Residues 1233 to 1243 show a composition bias toward polar residues; sequence QSNSTPMNQRA. Residues 1254 to 1271 are compositionally biased toward low complexity; it reads SSSSSPSLPSSFSSASVP. The span at 1277-1292 shows a compositional bias: polar residues; sequence DSSSPQVTYNLHSPQI. The interval 1300-1339 is interaction with MAPK1; sequence TPIYLRRARAQGITKEIPLYLPHSPMLESTEHCLVSPDGE. Disordered stretches follow at residues 1478–1505, 1519–1622, 1672–1726, and 1739–1767; these read QKKA…KSPL, SSEA…SSKV, GDFF…QAGK, and SGPG…QLSS. The span at 1522–1534 shows a compositional bias: basic and acidic residues; the sequence is AGKKTSSKPETKT. Low complexity predominate over residues 1570–1579; that stretch reads KASAFFSLAS. Residues 1580–1591 are compositionally biased toward polar residues; it reads PTSKAAQASDLS. Basic and acidic residues predominate over residues 1672 to 1682; that stretch reads GDFFNSPKEKG. Residue Ser1677 is modified to Phosphoserine. 2 stretches are compositionally biased toward polar residues: residues 1698-1715 and 1747-1756; these read VDST…TGQD and EDTSSPTSSS. Residues 1786 to 1936 form the bMERB domain; sequence KQEELKRLHK…ERTQDQHFEN (151 aa).

This sequence belongs to the Mical family. In terms of assembly, interacts with PLXNA4. Interacts with RAB1B. Interacts with MAPK1/ERK2. Interacts with RAB35, RAB8A, RAB10, RAB13 and RAB15 (in their GTP-bound forms); binding to RAB35 is of low affinity compared to other Rab proteins; at least in case of RAB8A may bind 2 molecules of RAB8A simultaneously through a high and a low affinity binding site, respectively. May interact with MAPK1/ERK2. The cofactor is FAD.

It localises to the nucleus. The protein localises to the cytoplasm. The enzyme catalyses L-methionyl-[F-actin] + NADPH + O2 + H(+) = L-methionyl-(R)-S-oxide-[F-actin] + NADP(+) + H2O. Its function is as follows. Methionine monooxygenase that promotes depolymerization of F-actin by mediating oxidation of residues 'Met-44' and 'Met-47' on actin to form methionine-sulfoxide, resulting in actin filament disassembly and preventing repolymerization. Regulates the disassembly of branched actin networks also by oxidizing ARP3B-containing ARP2/3 complexes leading to ARP3B dissociation from the network. Acts as a key regulator of the SRF signaling pathway elicited by nerve growth factor and serum: mediates oxidation and subsequent depolymerization of nuclear actin, leading to increase MKL1/MRTF-A presence in the nucleus and promote SRF:MKL1/MRTF-A-dependent gene transcription. Does not activate SRF:MKL1/MRTF-A through RhoA. The polypeptide is [F-actin]-monooxygenase MICAL2 (Rattus norvegicus (Rat)).